Consider the following 629-residue polypeptide: tRNA uridine 5-carboxymethylaminomethyl modification enzyme MnmG (629 aa).

FAD-binding positions include 13–18, Val125, and Ser180; that span reads GGGHAG. 273-287 contributes to the NAD(+) binding site; sequence GPRYCPSIEDKVMRF. Gln370 serves as a coordination point for FAD.

This sequence belongs to the MnmG family. In terms of assembly, homodimer. Heterotetramer of two MnmE and two MnmG subunits. FAD is required as a cofactor.

Its subcellular location is the cytoplasm. NAD-binding protein involved in the addition of a carboxymethylaminomethyl (cmnm) group at the wobble position (U34) of certain tRNAs, forming tRNA-cmnm(5)s(2)U34. The polypeptide is tRNA uridine 5-carboxymethylaminomethyl modification enzyme MnmG (Escherichia coli (strain SMS-3-5 / SECEC)).